The primary structure comprises 498 residues: Ribosomal RNA small subunit methyltransferase G 2 (498 aa).

Positions 1–230 are methyltransferase G; the sequence is MRNGTIRYPG…FQRLGPPTRI (230 aa). Glycine 89, methionine 94, and arginine 154 together coordinate S-adenosyl-L-methionine. The interval 231-498 is methyltransferase TrmH family; the sequence is RKETAMKRHG…SQTKHSPAPA (268 aa).

In the N-terminal section; belongs to the methyltransferase superfamily. RNA methyltransferase RsmG family. This sequence in the C-terminal section; belongs to the class IV-like SAM-binding methyltransferase superfamily. RNA methyltransferase TrmH family.

Its subcellular location is the cytoplasm. The catalysed reaction is guanosine(527) in 16S rRNA + S-adenosyl-L-methionine = N(7)-methylguanosine(527) in 16S rRNA + S-adenosyl-L-homocysteine. Its function is as follows. Specifically methylates the N7 position of guanine in position 527 of 16S rRNA. This chain is Ribosomal RNA small subunit methyltransferase G 2 (rsmG2), found in Syntrophobacter fumaroxidans (strain DSM 10017 / MPOB).